Consider the following 58-residue polypeptide: Large ribosomal subunit protein bL32c (58 aa).

This sequence belongs to the bacterial ribosomal protein bL32 family.

Its subcellular location is the plastid. It is found in the chloroplast. This is Large ribosomal subunit protein bL32c (rpl32) from Adiantum capillus-veneris (Maidenhair fern).